The sequence spans 732 residues: Protein DIA2 (732 aa).

TPR repeat units follow at residues 15 to 48 (VLKA…CDSY), 78 to 111 (IKIL…EPGN), and 113 to 145 (KCYI…CNND). Positions 204–251 (TDLVGNLPIEILPIIFQRFTTKELVTLSLVCNKWRDKILYHLDCFQEF) constitute an F-box domain. At Ser393 the chain carries Phosphoserine. LRR repeat units lie at residues 425–449 (LEKI…LLRG), 480–505 (FPDL…LLKF), 509–532 (WKNL…DEDQ), 550–574 (LQNL…LCEQ), 579–602 (GRKL…HAHT), 616–637 (LSKL…TMKS), and 645–669 (LENL…EFLK).

This sequence belongs to the DIA2 family. In terms of assembly, component of the SCF(DIA2) complex containing CDC53, SKP1, RBX1 and DIA2. Interacts with SKP1.

The protein localises to the nucleus. Its function is as follows. F-box protein component of a SCF (SKP1-CUL1-F-box protein) E3 ubiquitin-protein ligase complex which mediates the ubiquitination and subsequent proteasomal degradation of target proteins. Probably recognizes and binds to phosphorylated target proteins. The SCF(DIA2) complex is specifically involved in the pheromone induced degradation of phosphorylated TEC1. The SCF(DIA2) complex binds to DNA replication origins. Involved in DNA replication, genome stability, and the control of cell cycle, probably through its association to replication origins to facilitate the ubiquitination of another origin-binding protein. Required for invasive growth and growth under alkaline conditions. This chain is Protein DIA2 (DIA2), found in Saccharomyces cerevisiae (strain ATCC 204508 / S288c) (Baker's yeast).